We begin with the raw amino-acid sequence, 234 residues long: Iron-sulfur cluster co-chaperone protein HscB (234 aa).

Residues C40, C43, C57, and C60 each coordinate a divalent metal cation. A J domain is found at 71-143; that stretch reads DYFSLMNCNR…LTRGLYLLKL (73 aa).

This sequence belongs to the HscB family. In terms of assembly, interacts with ISCU and HSPA9 to form an iron-sulfur transfer complex. Interacts with SDHAF1 (via the first LYR motif); the interaction recruits the iron-sulfur transfer complex composed of HSC20, HSPA9 and ISCU and mediates the incorporation of iron-sulfur clusters into SDHB which also interacts with HSC20. Interacts with the cytoplasmic form of ISCU and with CIA complex member CIAO1 (via LYR motif). As to quaternary structure, homodimer. Interacts with ISCU (cytoplasmic form); this interaction stabilizes the (Fe-S) clusters on ISCU. Interacts with the CIA complex member CIAO1 (via LYR motif).

It is found in the cytoplasm. Its subcellular location is the mitochondrion. The protein operates within cofactor biosynthesis; iron-sulfur cluster biosynthesis. Its function is as follows. Acts as a co-chaperone in iron-sulfur cluster assembly in mitochondria. Required for incorporation of iron-sulfur clusters into SDHB, the iron-sulfur protein subunit of succinate dehydrogenase that is involved in complex II of the mitochondrial electron transport chain. Recruited to SDHB by interaction with SDHAF1 which first binds SDHB and then recruits the iron-sulfur transfer complex formed by HSC20, HSPA9 and ISCU through direct binding to HSC20. Plays an essential role in hematopoiesis. Functionally, acts as a co-chaperone in iron-sulfur cluster assembly in the cytoplasm. Also mediates complex formation between components of the cytosolic iron-sulfur biogenesis pathway and the CIA targeting complex composed of CIAO1, DIPK1B/FAM69B and MMS19 by binding directly to the scaffold protein ISCU and to CIAO1. This facilitates iron-sulfur cluster insertion into a number of cytoplasmic and nuclear proteins including POLD1, ELP3, DPYD and PPAT. The polypeptide is Iron-sulfur cluster co-chaperone protein HscB (Mus musculus (Mouse)).